Reading from the N-terminus, the 148-residue chain is Ubiquitin-conjugating enzyme E2 13 (148 aa).

The region spanning alanine 2 to valine 148 is the UBC core domain. The active-site Glycyl thioester intermediate is the cysteine 86.

Belongs to the ubiquitin-conjugating enzyme family. Heterodimer with spm2.

It carries out the reaction S-ubiquitinyl-[E1 ubiquitin-activating enzyme]-L-cysteine + [E2 ubiquitin-conjugating enzyme]-L-cysteine = [E1 ubiquitin-activating enzyme]-L-cysteine + S-ubiquitinyl-[E2 ubiquitin-conjugating enzyme]-L-cysteine.. It functions in the pathway protein modification; protein ubiquitination. Functionally, has a role in the DNA error-free postreplication repair (PRR) pathway. The ubc13/spm2 heterodimer catalyzes the synthesis of non-canonical poly-ubiquitin chains that are linked through 'Lys-63'. The chain is Ubiquitin-conjugating enzyme E2 13 (ubc13) from Schizosaccharomyces pombe (strain 972 / ATCC 24843) (Fission yeast).